Here is a 331-residue protein sequence, read N- to C-terminus: Anthranilate phosphoribosyltransferase (331 aa).

5-phospho-alpha-D-ribose 1-diphosphate is bound by residues glycine 79, glycine 82 to aspartate 83, threonine 87, asparagine 89 to threonine 92, lysine 107 to serine 115, and alanine 119. Glycine 79 contributes to the anthranilate binding site. Serine 91 provides a ligand contact to Mg(2+). Residue asparagine 110 participates in anthranilate binding. Arginine 165 serves as a coordination point for anthranilate. 2 residues coordinate Mg(2+): aspartate 223 and glutamate 224.

Belongs to the anthranilate phosphoribosyltransferase family. As to quaternary structure, homodimer. It depends on Mg(2+) as a cofactor.

The enzyme catalyses N-(5-phospho-beta-D-ribosyl)anthranilate + diphosphate = 5-phospho-alpha-D-ribose 1-diphosphate + anthranilate. It functions in the pathway amino-acid biosynthesis; L-tryptophan biosynthesis; L-tryptophan from chorismate: step 2/5. Catalyzes the transfer of the phosphoribosyl group of 5-phosphorylribose-1-pyrophosphate (PRPP) to anthranilate to yield N-(5'-phosphoribosyl)-anthranilate (PRA). The sequence is that of Anthranilate phosphoribosyltransferase from Phocaeicola vulgatus (strain ATCC 8482 / DSM 1447 / JCM 5826 / CCUG 4940 / NBRC 14291 / NCTC 11154) (Bacteroides vulgatus).